A 562-amino-acid chain; its full sequence is Potassium-transporting ATPase potassium-binding subunit (562 aa).

A run of 12 helical transmembrane segments spans residues 6–26, 62–82, 132–152, 175–195, 253–273, 283–303, 327–347, 356–376, 379–399, 416–436, 483–503, and 526–546; these read FLLI…LGGF, YALA…VLLM, GLTV…FALI, LYVL…QGVL, FVQM…FGQV, LIWA…YAEL, FGIL…CGAV, ALGG…FGGV, GLYG…LMIG, MTAL…ALAL, LLLA…VLAI, and LFIG…FIPA.

Belongs to the KdpA family. As to quaternary structure, the system is composed of three essential subunits: KdpA, KdpB and KdpC.

It is found in the cell inner membrane. Functionally, part of the high-affinity ATP-driven potassium transport (or Kdp) system, which catalyzes the hydrolysis of ATP coupled with the electrogenic transport of potassium into the cytoplasm. This subunit binds the periplasmic potassium ions and delivers the ions to the membrane domain of KdpB through an intramembrane tunnel. This Yersinia pseudotuberculosis serotype I (strain IP32953) protein is Potassium-transporting ATPase potassium-binding subunit.